Consider the following 281-residue polypeptide: Nhr-229 coiled coil domain containing nccd-1 (281 aa).

This Caenorhabditis elegans protein is Nhr-229 coiled coil domain containing nccd-1.